We begin with the raw amino-acid sequence, 209 residues long: GTP cyclohydrolase 1 (209 aa).

Zn(2+) is bound by residues cysteine 89, histidine 92, and cysteine 163.

The protein belongs to the GTP cyclohydrolase I family. In terms of assembly, toroid-shaped homodecamer, composed of two pentamers of five dimers.

The enzyme catalyses GTP + H2O = 7,8-dihydroneopterin 3'-triphosphate + formate + H(+). Its pathway is cofactor biosynthesis; 7,8-dihydroneopterin triphosphate biosynthesis; 7,8-dihydroneopterin triphosphate from GTP: step 1/1. This Sulfolobus acidocaldarius (strain ATCC 33909 / DSM 639 / JCM 8929 / NBRC 15157 / NCIMB 11770) protein is GTP cyclohydrolase 1.